The following is a 1756-amino-acid chain: RANBP2-like and GRIP domain-containing protein 2 (1756 aa).

The residue at position 21 (Ser21) is a Phosphoserine. 3 TPR repeats span residues 59–92 (PRAH…NPPQ), 583–616 (QKMG…LKII), and 647–680 (EDAH…VSYW). The segment at 759 to 804 (GPLYKNGSLRNADSEIKHSTPSPTKYSLSPSKSYKYSPKTPPRWAE) is disordered. Over residues 777–796 (STPSPTKYSLSPSKSYKYSP) the composition is skewed to low complexity. Residues 1029–1165 (HFEPVVQMPE…FEECQRLLLD (137 aa)) enclose the RanBD1 1 domain. Disordered stretches follow at residues 1206–1241 (TKVT…TLEW) and 1299–1324 (AKLN…ERDG). A compositionally biased stretch (polar residues) spans 1228–1237 (IKPNPENTGP). The span at 1310–1322 (TDEESDVTQEEER) shows a compositional bias: acidic residues. The RanBD1 2 domain occupies 1326-1462 (YFEPVVPLPD…FDEAKTAQEK (137 aa)). The span at 1573–1586 (NDSETSSVAQSGSE) shows a compositional bias: polar residues. Residues 1573-1614 (NDSETSSVAQSGSESKVEPKKCELSKNSDIEQSSDSKVKNLS) form a disordered region. Positions 1587-1610 (SKVEPKKCELSKNSDIEQSSDSKV) are enriched in basic and acidic residues. The GRIP domain maps to 1693-1743 (QEESAANVEHLKNVLLQFIFLKPGSERESLLPVINTMLQLSPEEKGKLAAV).

The polypeptide is RANBP2-like and GRIP domain-containing protein 2 (RGPD2) (Homo sapiens (Human)).